The following is a 3898-amino-acid chain: Genome polyprotein (3898 aa).

A Peptidase C53 domain is found at 1–168 (MELITNELLY…LDCPLWVTSC (168 aa)). Disordered stretches follow at residues 47-72 (LPHK…CRSG), 172-209 (KEEG…KPPD), and 223-245 (KKGK…KPPE). Active-site for N-terminal protease activity residues include H49 and C69. Basic and acidic residues predominate over residues 172-207 (KEEGATKKKQQKPDRLEKGRMKIVPKESEKDSKTKP). Residues N272, N281, N296, and N335 are each glycosylated (N-linked (GlcNAc...) asparagine; by host). 2 disulfides stabilise this stretch: C308-C352 and C338-C339. Residues H344, E345, K348, and H349 each act as for E(rns) glycoprotein RNase activity in the active site. N-linked (GlcNAc...) asparagine; by host glycosylation is found at N365 and N370. 2 cysteine pairs are disulfide-bonded: C380/C425 and C384/C408. N-linked (GlcNAc...) asparagine; by host glycans are attached at residues N413, N487, and N597. Residues 498–666 (ASPYCDVDRK…WNAATTTAFL (169 aa)) lie on the Lumenal side of the membrane. Residues 667 to 687 (VCLIKMVRGQVVQGILWLLLI) form a helical membrane-spanning segment. The Lumenal segment spans residues 688–1035 (TGVQGHLDCK…DHHRDYFAES (348 aa)). 2 disulfide bridges follow: C696/C740 and C751/C798. N809, N878, N922, and N990 each carry an N-linked (GlcNAc...) asparagine; by host glycan. 8 helical membrane passes run 1036 to 1056 (ILVV…LVTY), 1079 to 1099 (NLLT…YLLL), 1108 to 1128 (VLLL…VILL), 1144 to 1164 (LGQI…LIIA), 1189 to 1209 (PGVD…SYVT), 1217 to 1237 (WLQC…LIHL), 1247 to 1267 (IPNW…TVVT), and 1281 to 1301 (VPIL…ILIL). Residue N1357 is glycosylated (N-linked (GlcNAc...) asparagine; by host). Residues 1360 to 1380 (MLLPLVRATLISCVSSKWQLI) form a helical membrane-spanning segment. An N-linked (GlcNAc...) asparagine; by host glycan is attached at N1419. The 149-residue stretch at 1441-1589 (RNLIIKHKVR…DLEHLGWILR (149 aa)) folds into the Peptidase C74 domain. H1447 acts as the For cysteine protease NS2 activity in catalysis. N1451 carries N-linked (GlcNAc...) asparagine; by host glycosylation. Active-site for cysteine protease NS2 activity residues include E1461 and C1512. The helical transmembrane segment at 1568–1588 (MLMVGNLGEEVGDLEHLGWIL) threads the bilayer. The Peptidase S31 domain occupies 1590 to 1763 (GPAVCKKITE…LPIFEASSGR (174 aa)). Active-site charge relay system; for serine protease NS3 activity residues include H1658 and D1695. N1713 carries N-linked (GlcNAc...) asparagine; by host glycosylation. Residue S1752 is the Charge relay system; for serine protease NS3 activity of the active site. One can recognise a Helicase ATP-binding domain in the interval 1802–1960 (ITSMNRGDFK…QKHPIEEFIA (159 aa)). 1815–1822 (LATGAGKT) is an ATP binding site. Residues 1910-1913 (DEYH) carry the DEAH box motif. Residues 1978–2143 (GLKIPVDEMK…NVTKSFREMN (166 aa)) enclose the Helicase C-terminal domain. N-linked (GlcNAc...) asparagine; by host glycans are attached at residues N2134, N2217, N2494, N2682, N2751, N2891, and N2988. GTP is bound by residues T3499 and L3501. Residues 3518–3641 (PVAVSFDTKA…ITEKGLGLKF (124 aa)) enclose the RdRp catalytic domain. N3688 carries N-linked (GlcNAc...) asparagine; by host glycosylation. GTP is bound by residues R3696 and K3704. N-linked (GlcNAc...) asparagine; by host glycosylation is found at N3777 and N3793.

It belongs to the pestivirus polyprotein family. As to quaternary structure, homodimer; disulfide-linked. Homodimer; disulfide-linked. Heterodimer with E1; disulfide-linked. In terms of assembly, interacts with host IFIH1/MDA5; this interaction is involved in the inhibition of IFN-beta production. Post-translationally, heavily glycosylated. The viral RNA of pestiviruses is expressed as a single polyprotein which undergoes post-translational proteolytic processing resulting in the production of at least eleven individual proteins. The N-terminal protease cleaves itself from the nascent polyprotein autocatalytically and thereby generates the N-terminus of the adjacent viral capsid protein C. In terms of processing, cleavage between E2 and p7 is partial.

The protein localises to the virion. It is found in the host membrane. It localises to the virion membrane. Its subcellular location is the host endoplasmic reticulum membrane. The protein resides in the host cytoplasm. The catalysed reaction is Leu is conserved at position P1 for all four cleavage sites. Alanine is found at position P1' of the NS4A-NS4B cleavage site, whereas serine is found at position P1' of the NS3-NS4A, NS4B-NS5A and NS5A-NS5B cleavage sites.. It carries out the reaction RNA(n) + a ribonucleoside 5'-triphosphate = RNA(n+1) + diphosphate. It catalyses the reaction a ribonucleoside 5'-triphosphate + H2O = a ribonucleoside 5'-diphosphate + phosphate + H(+). The enzyme catalyses ATP + H2O = ADP + phosphate + H(+). The catalysed reaction is a ribonucleotidyl-ribonucleotide-RNA + H2O = a 3'-end 3'-phospho-ribonucleotide-RNA + a 5'-end dephospho-ribonucleoside-RNA + H(+). It carries out the reaction a ribonucleotidyl-ribonucleotide-RNA = a 3'-end 2',3'-cyclophospho-ribonucleotide-RNA + a 5'-end dephospho-ribonucleoside-RNA. It catalyses the reaction a 3'-end 2',3'-cyclophospho-ribonucleotide-RNA + H2O = a 3'-end 3'-phospho-ribonucleotide-RNA + H(+). Inhibited by Zn(2+), which binds the catalytic site. Functionally, leader cysteine autoprotease that cleaves itself from the nascent polyprotein during translation of the viral mRNA. Once released, plays a role in the inhibition of host innate immune response by interacting with host IRF3 and inducing its proteasomal degradation. Its function is as follows. Packages viral RNA to form a viral nucleocapsid and thereby protects viral RNA. Also plays a role in transcription regulation. Protects the incoming virus against IFN-induced effectors. In terms of biological role, initial binding to target cell probably involves interaction of E(rns) with glycosaminoglycans. Also possesses intrinsic ribonuclease (RNase) activity that can inhibit the production of type I interferon and assist in the development of persistent infections. E1 and/or E2 are probably responsible of cell attachment with CD46 and subsequent fusion after internalization of the virion by endocytosis. Functionally, E1 and/or E2 are probably responsible of cell attachment with CD46 and subsequent fusion after internalization of the virion by endocytosis. Probably functions as a coeffector of fusion providing structural integrity to the fusion complex and possibly controlling exposure of the fusion motif in E1. Its function is as follows. Plays an essential role in the virus replication cycle by acting as a viroporin. Forms ion conductive pores, which alters the cell permeability allowing the transport of ions and other small molecules. Forms a leader sequence to properly orient NS2 in the membrane. In terms of biological role, uncleaved NS2-3 is required for production of infectious virus. Plays a role in the regulation of viral RNA replication. Functionally, multifunctional protein that contains an N-terminal protease and a C-terminal helicase, playing essential roles in viral polyprotein processing and viral genome replication. The chymotrypsin-like serine protease activity utilizes NS4A as an essential cofactor and catalyzes the cleavage of the polyprotein leading to the release of NS4A, NS4B, NS5A, and NS5B. Interacts with NS5B to enhance RNA-dependent RNA polymerase activity. Its function is as follows. Acts as a cofactor for the NS3 protease activity. In terms of biological role, induces a specific membrane alteration that serves as a scaffold for the virus replication complex. Plays a role in the inhibition of host innate immune response by inhibiting RIGI/IFIH1-mediated IFN-beta production. Replicates the viral (+) and (-) genome. Initiates the primer-independent RNA replication via a de novo mechanism requiring GTP. The polypeptide is Genome polyprotein (Bos taurus (Bovine)).